We begin with the raw amino-acid sequence, 279 residues long: 3-methyl-2-oxobutanoate hydroxymethyltransferase (279 aa).

Residues D43 and D82 each coordinate Mg(2+). Residues 43-44, D82, and K112 contribute to the 3-methyl-2-oxobutanoate site; that span reads DS. E114 lines the Mg(2+) pocket. The active-site Proton acceptor is the E181.

Belongs to the PanB family. In terms of assembly, homodecamer; pentamer of dimers. Mg(2+) serves as cofactor.

Its subcellular location is the cytoplasm. The catalysed reaction is 3-methyl-2-oxobutanoate + (6R)-5,10-methylene-5,6,7,8-tetrahydrofolate + H2O = 2-dehydropantoate + (6S)-5,6,7,8-tetrahydrofolate. The protein operates within cofactor biosynthesis; (R)-pantothenate biosynthesis; (R)-pantoate from 3-methyl-2-oxobutanoate: step 1/2. Functionally, catalyzes the reversible reaction in which hydroxymethyl group from 5,10-methylenetetrahydrofolate is transferred onto alpha-ketoisovalerate to form ketopantoate. The protein is 3-methyl-2-oxobutanoate hydroxymethyltransferase of Shouchella clausii (strain KSM-K16) (Alkalihalobacillus clausii).